The chain runs to 95 residues: Large ribosomal subunit protein uL23 (95 aa).

It belongs to the universal ribosomal protein uL23 family. As to quaternary structure, part of the 50S ribosomal subunit. Contacts protein L29, and trigger factor when it is bound to the ribosome.

Functionally, one of the early assembly proteins it binds 23S rRNA. One of the proteins that surrounds the polypeptide exit tunnel on the outside of the ribosome. Forms the main docking site for trigger factor binding to the ribosome. The sequence is that of Large ribosomal subunit protein uL23 from Bacillus licheniformis (strain ATCC 14580 / DSM 13 / JCM 2505 / CCUG 7422 / NBRC 12200 / NCIMB 9375 / NCTC 10341 / NRRL NRS-1264 / Gibson 46).